The following is a 710-amino-acid chain: MSAQGDCEFLVQRARELVPQDLWAAKAWLITARSLYPADFNIQYEMYTIERNAERTATAGRLLYDMFVNFPDQPVVWREISIITSALRNDSQDKQTQFLRSLFETLPGRVQCEMLLKVTEQCFNTLERSEMLLLLLRRFPETVVQHGVGLGEALLEAETIEEQDSPVNCFRKLFVCDVLPLIINNHDVRLPANLLYKYLNKAAEFYINYVTRSTQSENQHQGAQDTSDLMSPSKRSSQKYIIEGLTEKSSHIVDPWERLFKILNVVGMRCEWQMDKGRRSCSDLLHRMKELCRYMNSFDSEAHNNYKNQVLYSTMLVFFKSAFQYVSSIQPSLFQGPNAPSQVPLILLEDVANVYGDVEIDRSKHIHKKRKLAEGREKTMSSDDEECSAKGRNRHIVVSKADLSNSIEVLESFKLARESWELLYSLEFLDKEFTRICLAWKTDTWLWLRIFLTDMIIYQGQYKKAIASLHHLAALQGSLSQPQITGQGTLEHQRALIQLATCHFALGEYRMTCEKVLDLMCYMVLPIQDGGKPQEEPSKVKPKCRKGLDLKLLPCTSKAIMPYCLHLMLACFKLRAFTDSRDDMALGHVIVLLQQEWPRGENLFLKAISKICQQGNFQYENFFSYVTNIDMLEEFAYLRTQEGGKIHLELLPNQGMLIKHHTVTRGITKGVKEDFRLAMERQVSRCGENLMAVLHRFCINEKILLLQTLT.

A phosphoserine mark is found at S231, S381, and S382. K464 participates in a covalent cross-link: Glycyl lysine isopeptide (Lys-Gly) (interchain with G-Cter in SUMO2).

Belongs to the Integrator subunit 10 family. Component of the Integrator complex, composed of core subunits INTS1, INTS2, INTS3, INTS4, INTS5, INTS6, INTS7, INTS8, INTS9/RC74, INTS10, INTS11/CPSF3L, INTS12, INTS13, INTS14 and INTS15. The core complex associates with protein phosphatase 2A subunits PPP2CA and PPP2R1A, to form the Integrator-PP2A (INTAC) complex. INTS10 is part of the tail subcomplex, composed of INTS10, INTS13, INTS14 and INTS15.

The protein localises to the nucleus. In terms of biological role, component of the integrator complex, a multiprotein complex that terminates RNA polymerase II (Pol II) transcription in the promoter-proximal region of genes. The integrator complex provides a quality checkpoint during transcription elongation by driving premature transcription termination of transcripts that are unfavorably configured for transcriptional elongation: the complex terminates transcription by (1) catalyzing dephosphorylation of the C-terminal domain (CTD) of Pol II subunit POLR2A/RPB1 and SUPT5H/SPT5, (2) degrading the exiting nascent RNA transcript via endonuclease activity and (3) promoting the release of Pol II from bound DNA. The integrator complex is also involved in terminating the synthesis of non-coding Pol II transcripts, such as enhancer RNAs (eRNAs), small nuclear RNAs (snRNAs), telomerase RNAs and long non-coding RNAs (lncRNAs). Within the integrator complex, INTS10 is part of the integrator tail module that acts as a platform for the recruitment of transcription factors at promoters. May be not involved in the recruitment of cytoplasmic dynein to the nuclear envelope, probably as component of the integrator complex. This Mus musculus (Mouse) protein is Integrator complex subunit 10 (Ints10).